We begin with the raw amino-acid sequence, 539 residues long: Protein ENTREP2 (539 aa).

Transmembrane regions (helical) follow at residues 31–51, 65–85, 89–109, and 176–196; these read IVLALGATQMALGCLIVAVSF, SCPFWAGFSVLLSGLIGVVSW, LSLVITFFMLLSAVCVMLNLA, and LLFSVCALNVLSTIVCALATA. Residues 301 to 481 form a disordered region; that stretch reads VVGQPPASQV…TSKERPRSLV (181 aa). Residues 306–331 show a composition bias toward polar residues; sequence PASQVTSIGQQVAESSSGDPNTSAGF. Residues 347 to 365 are compositionally biased toward low complexity; the sequence is GTATPGSSPSPDGPVGAPA. Residues 395 to 408 are compositionally biased toward polar residues; that stretch reads SRSTSDPTLCTSSM.

This sequence belongs to the ENTREP family.

The protein localises to the membrane. This is Protein ENTREP2 from Homo sapiens (Human).